A 115-amino-acid polypeptide reads, in one-letter code: Nucleoid-associated protein Ava_2322 (115 aa).

It belongs to the YbaB/EbfC family. Homodimer.

It localises to the cytoplasm. Its subcellular location is the nucleoid. Functionally, binds to DNA and alters its conformation. May be involved in regulation of gene expression, nucleoid organization and DNA protection. The sequence is that of Nucleoid-associated protein Ava_2322 from Trichormus variabilis (strain ATCC 29413 / PCC 7937) (Anabaena variabilis).